The chain runs to 573 residues: Potassium-transporting ATPase potassium-binding subunit (573 aa).

Helical transmembrane passes span 6–26, 66–86, 135–155, 177–197, 257–277, 283–303, 382–402, 428–448, 493–513, and 537–557; these read ILFA…GSYI, FFSL…ILLL, ALAV…IALI, IFWI…FQGV, IQMV…GKWV, GWLI…VMTI, IFGG…LAVF, MFAL…AAVI, ITIA…VIML, and FIFA…TIFP.

The protein belongs to the KdpA family. In terms of assembly, the system is composed of three essential subunits: KdpA, KdpB and KdpC.

Its subcellular location is the cell inner membrane. In terms of biological role, part of the high-affinity ATP-driven potassium transport (or Kdp) system, which catalyzes the hydrolysis of ATP coupled with the electrogenic transport of potassium into the cytoplasm. This subunit binds the periplasmic potassium ions and delivers the ions to the membrane domain of KdpB through an intramembrane tunnel. This is Potassium-transporting ATPase potassium-binding subunit from Francisella tularensis subsp. novicida (strain U112).